We begin with the raw amino-acid sequence, 839 residues long: MNTKRAYKLQEFVAHSAAVNCLKIGRKSSRVLVTGGEDHKVNLWAIGKPNAILSLYGHSSGIDSVTFDASEGLVAAGAASGTIKLWDLEEAKVVRTLTGHRSNCVSVNFHPFGEFFASGSLDTNLKIWDIRKKGCIHTYKGHTRGVNVLRFTPDGRWIVSGGEDNVVKVWDLTAGKLLHEFKSHEGKIQSLDFHPHEFLLATGSADKTVKFWDLETFELIGSGGTETTGVRCLTFNPDGKSVLCGLQESLKIFSWEPIRCHDGVDVGWSNLSDMNVHEGKLLGCSYNQNCVGVWVVDLSRTEPMSGGATQSNSHPEKTSGSGRDQAGLNDNSSKVILGKLPGSQKVDPLLKETKSLGKLSVSQNSDPLPKDTKSTGRSSVSQSSDPLVKEPKPLGRFSATHSSDTVKESRTLSSTGSVSDSPHRVTLTSAPKSASGISTVVPNAAASKRNFGKANPKANPPVVNKEDYFPVIVPRTEPIIEQASESRAELDIIGRTMPYSLQSKAADSRRLSSSRNEPDLPTSSLLERSQSQPIEPITLQDGNTYPSDEGGSWDTAERTNKESKCRVFGRFNSRSLVRSPPRNHDENSDLISYNANRDSSPTESRKGGRLHSLVLNRERRGRFSNFEGPVSSSSGGNMTAPNSRPSNMLKQRGNHVPVDQGITSASEEDIVADIMGQHDQFVSSMHSRLAKLQVVRRYWERNDIKNSISSIEKMADNAVIADVLLIVNERPEILTLDTCTSLLPLLTALLGSNMDSHLSVCLDLLLKLVRMYGSQIYSSLSAPSSVGVDIEAEQRMERYSCCFVEFEKIKACLPSLARRGNLVAKTLHELNLTFQEVSS.

7 WD repeats span residues 14 to 54, 57 to 96, 99 to 138, 141 to 182, 184 to 222, 225 to 265, and 267 to 304; these read AHSA…AILS, GHSS…VVRT, GHRS…CIHT, GHTR…HEFK, HEGK…LIGS, TETT…DGVD, and GWSN…TEPM. The short motif at 115-131 is the DWD box element; it reads FFASGSLDTNLKIWDIR. Disordered regions lie at residues 303–340, 357–435, 501–561, and 575–648; these read PMSG…LGKL, GKLS…KSAS, LQSK…RTNK, and SLVR…PSNM. Composition is skewed to polar residues over residues 307–334, 375–385, 411–435, 501–533, 589–602, and 630–648; these read GATQ…NSSK, TGRSSVSQSSD, TLSS…KSAS, LQSK…QSQP, DLIS…SSPT, and VSSS…PSNM.

The protein belongs to the WD repeat KATNB1 family. As to quaternary structure, component of KTN80-KTN1 complexes composed of a hexamer of KTN1-KTN80 heterodimers that sense microtubule (MT) geometry to confer precise MT severing. Interacts directly with AAA1/KTN1 and KTN80.1, and weakly with KTN80.4. As to expression, expressed in siliques, flowers, leaves, stems and roots.

Its subcellular location is the cytoplasm. The protein resides in the cytoskeleton. In terms of biological role, may participate in a complex which severs microtubules in an ATP-dependent manner. Microtubule severing may promote rapid reorganization of cellular microtubule arrays. Confers precision to microtubule (MT) severing by specific targeting of KTN1 to MT cleavage sites such as crossover or branching nucleation sites. Together with other KTN80s, regulates cell elongation by modulating MT organization. The protein is Katanin p80 WD40 repeat-containing subunit B1 homolog KTN80.3 of Arabidopsis thaliana (Mouse-ear cress).